Consider the following 209-residue polypeptide: Ras-like protein (209 aa).

Gly-15–Ser-22 contacts GTP. The Effector region motif lies at Tyr-37–Tyr-45. GTP-binding positions include Asp-62–Gln-66 and Asn-121–Asp-124. 2 S-palmitoyl cysteine lipidation sites follow: Cys-202 and Cys-203. Cysteine methyl ester is present on Cys-206. Cys-206 carries S-geranylgeranyl cysteine lipidation. The propeptide at Ile-207–Met-209 is removed in mature form.

This sequence belongs to the small GTPase superfamily. Ras family.

It is found in the cell membrane. The catalysed reaction is GTP + H2O = GDP + phosphate + H(+). Alternates between an inactive form bound to GDP and an active form bound to GTP. Activated by a guanine nucleotide-exchange factor (GEF) and inactivated by a GTPase-activating protein (GAP). This chain is Ras-like protein, found in Laccaria bicolor (Bicoloured deceiver).